The primary structure comprises 175 residues: Putative lipoprotein LppP (175 aa).

The signal sequence occupies residues 1 to 30 (MRRQRSAVPILALLALLALLALIVGLGASG). Residue cysteine 31 is the site of N-palmitoyl cysteine attachment. A lipid anchor (S-diacylglycerol cysteine) is attached at cysteine 31.

The protein resides in the cell membrane. The polypeptide is Putative lipoprotein LppP (lppP) (Mycobacterium bovis (strain ATCC BAA-935 / AF2122/97)).